Here is a 372-residue protein sequence, read N- to C-terminus: Biglycan (372 aa).

The signal sequence occupies residues 1 to 19 (MPTMWPLWLLASLLALSQA). The propeptide occupies 20–40 (LPFEQKGFWDFTLDDGLPMLN). Residues Ser-45 and Ser-51 are each glycosylated (O-linked (Xyl...) (glycosaminoglycan) serine). Intrachain disulfides connect Cys-67-Cys-73 and Cys-71-Cys-80. 12 LRR repeats span residues 86–106 (KAVP…NNEI), 107–130 (SELR…NNKI), 131–154 (SKIH…KNHL), 155–175 (VEIP…DNRI), 176–199 (RKVP…GNPL), 200–224 (ENSG…EAKL), 225–245 (TGIP…HNKI), 246–269 (QAIE…HNQI), 270–293 (RMIE…NNKL), 294–316 (SRVP…TNNI), 317–346 (TKVG…NNPV), and 347–372 (PYWE…NYKK). N-linked (GlcNAc...) asparagine glycans are attached at residues Asn-274 and Asn-315. Cys-325 and Cys-358 are joined by a disulfide.

It belongs to the small leucine-rich proteoglycan (SLRP) family. SLRP class I subfamily. In terms of assembly, homodimer. Forms a ternary complex with MFAP2 and ELN. In terms of processing, the two attached glycosaminoglycan chains can be either chondroitin sulfate or dermatan sulfate.

It is found in the secreted. It localises to the extracellular space. The protein resides in the extracellular matrix. Its function is as follows. May be involved in collagen fiber assembly. The polypeptide is Biglycan (BGN) (Equus caballus (Horse)).